A 438-amino-acid polypeptide reads, in one-letter code: Trigger factor (438 aa).

Residues aspartate 160 to proline 245 enclose the PPIase FKBP-type domain.

The protein belongs to the FKBP-type PPIase family. Tig subfamily.

The protein localises to the cytoplasm. The enzyme catalyses [protein]-peptidylproline (omega=180) = [protein]-peptidylproline (omega=0). Functionally, involved in protein export. Acts as a chaperone by maintaining the newly synthesized protein in an open conformation. Functions as a peptidyl-prolyl cis-trans isomerase. This is Trigger factor from Francisella tularensis subsp. mediasiatica (strain FSC147).